The chain runs to 228 residues: Phosphoribosylformylglycinamidine synthase subunit PurQ (228 aa).

A Glutamine amidotransferase type-1 domain is found at F3–V226. Catalysis depends on C86, which acts as the Nucleophile. Catalysis depends on residues H195 and E197.

Part of the FGAM synthase complex composed of 1 PurL, 1 PurQ and 2 PurS subunits.

The protein resides in the cytoplasm. It catalyses the reaction N(2)-formyl-N(1)-(5-phospho-beta-D-ribosyl)glycinamide + L-glutamine + ATP + H2O = 2-formamido-N(1)-(5-O-phospho-beta-D-ribosyl)acetamidine + L-glutamate + ADP + phosphate + H(+). The enzyme catalyses L-glutamine + H2O = L-glutamate + NH4(+). It functions in the pathway purine metabolism; IMP biosynthesis via de novo pathway; 5-amino-1-(5-phospho-D-ribosyl)imidazole from N(2)-formyl-N(1)-(5-phospho-D-ribosyl)glycinamide: step 1/2. Functionally, part of the phosphoribosylformylglycinamidine synthase complex involved in the purines biosynthetic pathway. Catalyzes the ATP-dependent conversion of formylglycinamide ribonucleotide (FGAR) and glutamine to yield formylglycinamidine ribonucleotide (FGAM) and glutamate. The FGAM synthase complex is composed of three subunits. PurQ produces an ammonia molecule by converting glutamine to glutamate. PurL transfers the ammonia molecule to FGAR to form FGAM in an ATP-dependent manner. PurS interacts with PurQ and PurL and is thought to assist in the transfer of the ammonia molecule from PurQ to PurL. The sequence is that of Phosphoribosylformylglycinamidine synthase subunit PurQ from Anoxybacillus flavithermus (strain DSM 21510 / WK1).